The following is a 175-amino-acid chain: Adenine phosphoribosyltransferase (175 aa).

This sequence belongs to the purine/pyrimidine phosphoribosyltransferase family. As to quaternary structure, homodimer.

It localises to the cytoplasm. It carries out the reaction AMP + diphosphate = 5-phospho-alpha-D-ribose 1-diphosphate + adenine. It functions in the pathway purine metabolism; AMP biosynthesis via salvage pathway; AMP from adenine: step 1/1. Its function is as follows. Catalyzes a salvage reaction resulting in the formation of AMP, that is energically less costly than de novo synthesis. The sequence is that of Adenine phosphoribosyltransferase from Francisella tularensis subsp. tularensis (strain FSC 198).